Reading from the N-terminus, the 166-residue chain is uncharacterized protein (166 aa).

The may interact with smn1 stretch occupies residues 1 to 58 (MSSEITEGDLQKFHDEHFNAKAVNLWNVAFAQNDRGGNSESANVEYTQSVERYPDGTI).

In terms of assembly, part of the core SMN complex at least composed of smn1, yip11/gem2, gem6, gem7 and gem8. Interacts with smn1; the interaction is direct. Interacts with gem7; the interaction is direct.

It is found in the cytoplasm. It localises to the nucleus. The SMN complex catalyzes the assembly of small nuclear ribonucleoproteins (snRNPs), the building blocks of the spliceosome, and thereby plays an important role in the splicing of cellular pre-mRNAs. Most spliceosomal snRNPs contain a common set of Sm proteins SNRPB, SNRPD1, SNRPD2, SNRPD3, SNRPE, SNRPF and SNRPG that assemble in a heptameric protein ring on the Sm site of the small nuclear RNA to form the core snRNP (Sm core). In the cytosol, the Sm proteins SNRPD1, SNRPD2, SNRPE, SNRPF and SNRPG are trapped in an inactive 6S pICln-Sm complex by the chaperone CLNS1A that controls the assembly of the core snRNP. To assemble core snRNPs, the SMN complex accepts the trapped 5Sm proteins from CLNS1A forming an intermediate. Binding of snRNA inside 5Sm triggers eviction of the SMN complex, thereby allowing binding of SNRPD3 and SNRPB to complete assembly of the core snRNP. This is an uncharacterized protein from Schizosaccharomyces pombe (strain 972 / ATCC 24843) (Fission yeast).